The following is a 290-amino-acid chain: ATP synthase gamma chain (290 aa).

Belongs to the ATPase gamma chain family. In terms of assembly, F-type ATPases have 2 components, CF(1) - the catalytic core - and CF(0) - the membrane proton channel. CF(1) has five subunits: alpha(3), beta(3), gamma(1), delta(1), epsilon(1). CF(0) has three main subunits: a, b and c.

The protein localises to the cell inner membrane. Produces ATP from ADP in the presence of a proton gradient across the membrane. The gamma chain is believed to be important in regulating ATPase activity and the flow of protons through the CF(0) complex. The polypeptide is ATP synthase gamma chain (Erythrobacter litoralis (strain HTCC2594)).